A 255-amino-acid chain; its full sequence is Imidazole glycerol phosphate synthase subunit HisF (255 aa).

Active-site residues include Asp11 and Asp130.

Belongs to the HisA/HisF family. As to quaternary structure, heterodimer of HisH and HisF.

The protein localises to the cytoplasm. The catalysed reaction is 5-[(5-phospho-1-deoxy-D-ribulos-1-ylimino)methylamino]-1-(5-phospho-beta-D-ribosyl)imidazole-4-carboxamide + L-glutamine = D-erythro-1-(imidazol-4-yl)glycerol 3-phosphate + 5-amino-1-(5-phospho-beta-D-ribosyl)imidazole-4-carboxamide + L-glutamate + H(+). It participates in amino-acid biosynthesis; L-histidine biosynthesis; L-histidine from 5-phospho-alpha-D-ribose 1-diphosphate: step 5/9. Functionally, IGPS catalyzes the conversion of PRFAR and glutamine to IGP, AICAR and glutamate. The HisF subunit catalyzes the cyclization activity that produces IGP and AICAR from PRFAR using the ammonia provided by the HisH subunit. This Synechococcus sp. (strain ATCC 27144 / PCC 6301 / SAUG 1402/1) (Anacystis nidulans) protein is Imidazole glycerol phosphate synthase subunit HisF.